The primary structure comprises 274 residues: 2,3,4,5-tetrahydropyridine-2,6-dicarboxylate N-succinyltransferase (274 aa).

It belongs to the transferase hexapeptide repeat family.

The protein resides in the cytoplasm. The enzyme catalyses (S)-2,3,4,5-tetrahydrodipicolinate + succinyl-CoA + H2O = (S)-2-succinylamino-6-oxoheptanedioate + CoA. It participates in amino-acid biosynthesis; L-lysine biosynthesis via DAP pathway; LL-2,6-diaminopimelate from (S)-tetrahydrodipicolinate (succinylase route): step 1/3. The sequence is that of 2,3,4,5-tetrahydropyridine-2,6-dicarboxylate N-succinyltransferase from Yersinia pseudotuberculosis serotype IB (strain PB1/+).